The following is a 633-amino-acid chain: DNA mismatch repair protein MutL (633 aa).

Disordered regions lie at residues 336 to 364 (VRPDDQLAPPGATSLTEPRPTGAAAGEFG) and 384 to 405 (GWSGGASSSGASSGYSAYTRPE). Residues 388-401 (GASSSGASSGYSAY) are compositionally biased toward low complexity.

The protein belongs to the DNA mismatch repair MutL/HexB family.

Its function is as follows. This protein is involved in the repair of mismatches in DNA. It is required for dam-dependent methyl-directed DNA mismatch repair. May act as a 'molecular matchmaker', a protein that promotes the formation of a stable complex between two or more DNA-binding proteins in an ATP-dependent manner without itself being part of a final effector complex. In Pseudomonas paraeruginosa (strain DSM 24068 / PA7) (Pseudomonas aeruginosa (strain PA7)), this protein is DNA mismatch repair protein MutL.